Here is a 494-residue protein sequence, read N- to C-terminus: NADH-quinone oxidoreductase subunit N (494 aa).

14 consecutive transmembrane segments (helical) span residues 9–29, 36–56, 73–93, 107–127, 131–151, 166–186, 209–229, 241–261, 278–298, 304–324, 339–359, 382–402, 416–436, and 469–489; these read VIPE…DLFL, LTYV…LSDF, PMSN…LVYS, LGGE…VMMS, FLII…LVAF, FVLG…LYGA, LIFG…AVPF, PTAV…AITI, MLTI…IMQT, LAYS…SGVV, MFYV…IMLL, FAFV…VVGF, GQIW…FYYL, and ALLA…AAII.

Belongs to the complex I subunit 2 family. As to quaternary structure, NDH-1 is composed of 14 different subunits. Subunits NuoA, H, J, K, L, M, N constitute the membrane sector of the complex.

It localises to the cell inner membrane. It carries out the reaction a quinone + NADH + 5 H(+)(in) = a quinol + NAD(+) + 4 H(+)(out). Its function is as follows. NDH-1 shuttles electrons from NADH, via FMN and iron-sulfur (Fe-S) centers, to quinones in the respiratory chain. The immediate electron acceptor for the enzyme in this species is believed to be ubiquinone. Couples the redox reaction to proton translocation (for every two electrons transferred, four hydrogen ions are translocated across the cytoplasmic membrane), and thus conserves the redox energy in a proton gradient. The protein is NADH-quinone oxidoreductase subunit N of Herminiimonas arsenicoxydans.